The primary structure comprises 134 residues: Small ribosomal subunit protein uS12 (134 aa).

Positions 1–26 (MPTTQQLLRKGRTTLQKKSKVPALKG) are disordered. Basic residues predominate over residues 9-20 (RKGRTTLQKKSK). Asp-89 bears the 3-methylthioaspartic acid mark. Residues 103–134 (DTQGVKDRNKSRSKYGTKKPKAGAAAAGAKKK) are disordered. Basic residues predominate over residues 113 to 123 (SRSKYGTKKPK). The span at 124–134 (AGAAAAGAKKK) shows a compositional bias: low complexity.

Belongs to the universal ribosomal protein uS12 family. Part of the 30S ribosomal subunit. Contacts proteins S8 and S17. May interact with IF1 in the 30S initiation complex.

Its function is as follows. With S4 and S5 plays an important role in translational accuracy. In terms of biological role, interacts with and stabilizes bases of the 16S rRNA that are involved in tRNA selection in the A site and with the mRNA backbone. Located at the interface of the 30S and 50S subunits, it traverses the body of the 30S subunit contacting proteins on the other side and probably holding the rRNA structure together. The combined cluster of proteins S8, S12 and S17 appears to hold together the shoulder and platform of the 30S subunit. This is Small ribosomal subunit protein uS12 from Deinococcus geothermalis (strain DSM 11300 / CIP 105573 / AG-3a).